A 452-amino-acid chain; its full sequence is Cysteine--tRNA ligase (452 aa).

C27 contributes to the Zn(2+) binding site. A 'HIGH' region motif is present at residues 29-39; the sequence is PTVQDHFHIGH. 3 residues coordinate Zn(2+): D207, H232, and E236. The 'KMSKS' region motif lies at 265 to 269; sequence KMSKS. K268 contributes to the ATP binding site.

Belongs to the class-I aminoacyl-tRNA synthetase family. Zn(2+) serves as cofactor.

The protein resides in the cytoplasm. The enzyme catalyses tRNA(Cys) + L-cysteine + ATP = L-cysteinyl-tRNA(Cys) + AMP + diphosphate. This is Cysteine--tRNA ligase from Thermoplasma acidophilum (strain ATCC 25905 / DSM 1728 / JCM 9062 / NBRC 15155 / AMRC-C165).